The sequence spans 29 residues: Cytochrome b6-f complex subunit 8 (29 aa).

The chain crosses the membrane as a helical span at residues 3 to 23; that stretch reads IVSIAWAALMVVFSFSLSLVV.

It belongs to the PetN family. The 4 large subunits of the cytochrome b6-f complex are cytochrome b6, subunit IV (17 kDa polypeptide, PetD), cytochrome f and the Rieske protein, while the 4 small subunits are PetG, PetL, PetM and PetN. The complex functions as a dimer.

The protein localises to the plastid. It is found in the chloroplast thylakoid membrane. Functionally, component of the cytochrome b6-f complex, which mediates electron transfer between photosystem II (PSII) and photosystem I (PSI), cyclic electron flow around PSI, and state transitions. The polypeptide is Cytochrome b6-f complex subunit 8 (Phaseolus vulgaris (Kidney bean)).